An 80-amino-acid polypeptide reads, in one-letter code: UPF0270 protein AHA_0994 (80 aa).

Belongs to the UPF0270 family.

This is UPF0270 protein AHA_0994 from Aeromonas hydrophila subsp. hydrophila (strain ATCC 7966 / DSM 30187 / BCRC 13018 / CCUG 14551 / JCM 1027 / KCTC 2358 / NCIMB 9240 / NCTC 8049).